The following is a 365-amino-acid chain: UDP-N-acetylglucosamine--N-acetylmuramyl-(pentapeptide) pyrophosphoryl-undecaprenol N-acetylglucosamine transferase (365 aa).

Residues 11–13, Asn-124, Arg-165, Ser-192, Ile-246, and Gln-291 each bind UDP-N-acetyl-alpha-D-glucosamine; that span reads TGG.

It belongs to the glycosyltransferase 28 family. MurG subfamily.

The protein resides in the cell inner membrane. It carries out the reaction di-trans,octa-cis-undecaprenyl diphospho-N-acetyl-alpha-D-muramoyl-L-alanyl-D-glutamyl-meso-2,6-diaminopimeloyl-D-alanyl-D-alanine + UDP-N-acetyl-alpha-D-glucosamine = di-trans,octa-cis-undecaprenyl diphospho-[N-acetyl-alpha-D-glucosaminyl-(1-&gt;4)]-N-acetyl-alpha-D-muramoyl-L-alanyl-D-glutamyl-meso-2,6-diaminopimeloyl-D-alanyl-D-alanine + UDP + H(+). The protein operates within cell wall biogenesis; peptidoglycan biosynthesis. In terms of biological role, cell wall formation. Catalyzes the transfer of a GlcNAc subunit on undecaprenyl-pyrophosphoryl-MurNAc-pentapeptide (lipid intermediate I) to form undecaprenyl-pyrophosphoryl-MurNAc-(pentapeptide)GlcNAc (lipid intermediate II). The sequence is that of UDP-N-acetylglucosamine--N-acetylmuramyl-(pentapeptide) pyrophosphoryl-undecaprenol N-acetylglucosamine transferase from Nitratidesulfovibrio vulgaris (strain DP4) (Desulfovibrio vulgaris).